A 395-amino-acid polypeptide reads, in one-letter code: Multidrug resistance protein MdtL (395 aa).

A run of 12 helical transmembrane segments spans residues 4 to 24 (FLLC…MYLV), 42 to 62 (IAFS…GKIA), 69 to 89 (PVAI…SRAS), 93 to 113 (LFLS…VVAF), 131 to 151 (LLNG…HLIM), 158 to 178 (SLFY…LFIL), 217 to 237 (VSVI…VMGF), 247 to 267 (ALTA…LGLF), 271 to 291 (TLML…SLAH), 295 to 315 (VTLF…GVAM), 328 to 350 (VASS…LAAI), and 355 to 377 (AMNM…IFSV).

The protein belongs to the major facilitator superfamily. DHA1 family. MdtL (TC 2.A.1.2.22) subfamily.

It is found in the cell inner membrane. This chain is Multidrug resistance protein MdtL, found in Salmonella newport (strain SL254).